We begin with the raw amino-acid sequence, 639 residues long: tRNA (uracil(54)-C(5))-methyltransferase (639 aa).

Positions 78-113 are disordered; sequence VPPTMKHTVDNKRLSSPLTDSGNRRTKKPKLRKYKA. Residues Ser-92 and Ser-93 each carry the phosphoserine modification. Positions 101-113 are enriched in basic residues; the sequence is RRTKKPKLRKYKA. One can recognise a TRAM domain in the interval 163–228; it reads LQYHREVKNV…PYYVESDLLD (66 aa). Residues Gln-461, Tyr-496, Glu-517, and Asp-564 each contribute to the S-adenosyl-L-methionine site. Cys-591 functions as the Nucleophile in the catalytic mechanism. The Proton acceptor role is filled by Glu-631.

It belongs to the class I-like SAM-binding methyltransferase superfamily. RNA M5U methyltransferase family.

It catalyses the reaction uridine(54) in tRNA + S-adenosyl-L-methionine = 5-methyluridine(54) in tRNA + S-adenosyl-L-homocysteine + H(+). Functionally, catalyzes the formation of 5-methyl-uridine at position 54 (m5U54) in all tRNA. May also have a role in tRNA stabilization or maturation. This Saccharomyces cerevisiae (strain ATCC 204508 / S288c) (Baker's yeast) protein is tRNA (uracil(54)-C(5))-methyltransferase (TRM2).